Reading from the N-terminus, the 516-residue chain is L-amino acid oxidase (516 aa).

Positions 1–18 are cleaved as a signal peptide; it reads MNVFFMFSLLFLAALESC. Residues 61–62, 81–82, R89, and 105–108 each bind FAD; these read MS, EA, and GPMR. A substrate-binding site is contributed by R108. An N-linked (GlcNAc...) asparagine glycan is attached at N190. V279 contacts FAD. N-linked (GlcNAc...) asparagine glycosylation is found at N299 and N404. An intrachain disulfide couples C349 to C430. Residues E475 and 482–487 contribute to the FAD site; that span reads GWIDST. Residue 482 to 483 participates in substrate binding; it reads GW.

It belongs to the flavin monoamine oxidase family. FIG1 subfamily. As to quaternary structure, homodimer; non-covalently linked. The cofactor is FAD. Post-translationally, N-glycosylated (14%). The enzymatic activity remains unchanged after deglycosylation. As to expression, expressed by the venom gland.

The protein localises to the secreted. It carries out the reaction an L-alpha-amino acid + O2 + H2O = a 2-oxocarboxylate + H2O2 + NH4(+). The enzyme catalyses L-leucine + O2 + H2O = 4-methyl-2-oxopentanoate + H2O2 + NH4(+). It catalyses the reaction L-phenylalanine + O2 + H2O = 3-phenylpyruvate + H2O2 + NH4(+). The catalysed reaction is L-tryptophan + O2 + H2O = indole-3-pyruvate + H2O2 + NH4(+). It carries out the reaction L-methionine + O2 + H2O = 4-methylsulfanyl-2-oxobutanoate + H2O2 + NH4(+). The enzyme catalyses L-isoleucine + O2 + H2O = (S)-3-methyl-2-oxopentanoate + H2O2 + NH4(+). With respect to regulation, inhibited by the substrate analog N-acetyl tryptophan. In terms of biological role, catalyzes an oxidative deamination of predominantly hydrophobic and aromatic L-amino acids, thus producing hydrogen peroxide that may contribute to the diverse toxic effects of this enzyme. Is highly active on L-Met&gt;L-Leu&gt;L-Phe&gt;L-Trp=L-Ile. Binds to the cell surface and enables the production of highly localized concentration of hydrogen peroxide in or near the binding interfaces. Does not bind to phospholipids. Induces platelet-rich plasma aggregation, shows cytotoxic effects on some cancer cell lines (B16-F10 (mouse melanoma), PC12 (rat pheochromocytoma), MCF-7 and MDA-MB-231 (human breast carcinoma)) and shows antibacterial activities against both Gram-positive and Gram-negative bacteria. Also exhibits hemorrhage and edema. Does not show cytotoxicity on erythrocytes and peripheral blood mononuclear cells. Its effect on platelets is controversial, since it either induces aggregation or inhibits agonist-induced aggregation. These different effects are probably due to different experimental conditions. This chain is L-amino acid oxidase, found in Cerastes cerastes (Horned desert viper).